The following is a 558-amino-acid chain: Dihydroxy-acid dehydratase (558 aa).

Asp-78 serves as a coordination point for Mg(2+). Cys-119 is a binding site for [2Fe-2S] cluster. Residues Asp-120 and Lys-121 each contribute to the Mg(2+) site. Lys-121 is modified (N6-carboxylysine). Cys-192 is a binding site for [2Fe-2S] cluster. A Mg(2+)-binding site is contributed by Glu-445. Ser-471 acts as the Proton acceptor in catalysis.

Belongs to the IlvD/Edd family. In terms of assembly, homodimer. Requires [2Fe-2S] cluster as cofactor. The cofactor is Mg(2+).

The enzyme catalyses (2R)-2,3-dihydroxy-3-methylbutanoate = 3-methyl-2-oxobutanoate + H2O. The catalysed reaction is (2R,3R)-2,3-dihydroxy-3-methylpentanoate = (S)-3-methyl-2-oxopentanoate + H2O. The protein operates within amino-acid biosynthesis; L-isoleucine biosynthesis; L-isoleucine from 2-oxobutanoate: step 3/4. Its pathway is amino-acid biosynthesis; L-valine biosynthesis; L-valine from pyruvate: step 3/4. In terms of biological role, functions in the biosynthesis of branched-chain amino acids. Catalyzes the dehydration of (2R,3R)-2,3-dihydroxy-3-methylpentanoate (2,3-dihydroxy-3-methylvalerate) into 2-oxo-3-methylpentanoate (2-oxo-3-methylvalerate) and of (2R)-2,3-dihydroxy-3-methylbutanoate (2,3-dihydroxyisovalerate) into 2-oxo-3-methylbutanoate (2-oxoisovalerate), the penultimate precursor to L-isoleucine and L-valine, respectively. The protein is Dihydroxy-acid dehydratase of Akkermansia muciniphila (strain ATCC BAA-835 / DSM 22959 / JCM 33894 / BCRC 81048 / CCUG 64013 / CIP 107961 / Muc).